Consider the following 258-residue polypeptide: Snake venom serine protease PTLE1 (258 aa).

The first 18 residues, 1–18, serve as a signal peptide directing secretion; it reads MVLIRVLANLLILQLSYA. Positions 19-24 are excised as a propeptide; that stretch reads QKSSEL. In terms of domain architecture, Peptidase S1 spans 25–249; the sequence is VIGGDECNIN…YTDWIENIIA (225 aa). 6 disulfide bridges follow: Cys-31/Cys-163, Cys-50/Cys-66, Cys-98/Cys-256, Cys-142/Cys-210, Cys-174/Cys-189, and Cys-200/Cys-225. Asn-44 carries an N-linked (GlcNAc...) asparagine glycan. His-65 acts as the Charge relay system in catalysis. Asn-79 and Asn-103 each carry an N-linked (GlcNAc...) asparagine glycan. Asp-110 serves as the catalytic Charge relay system. Asn-121 carries N-linked (GlcNAc...) asparagine glycosylation. Residue Ser-204 is the Charge relay system of the active site.

This sequence belongs to the peptidase S1 family. Snake venom subfamily. In terms of assembly, monomer. In terms of tissue distribution, expressed by the venom gland.

The protein localises to the secreted. Functionally, snake venom serine protease that may act in the hemostasis system of the prey. This chain is Snake venom serine protease PTLE1, found in Gloydius halys (Chinese water mocassin).